We begin with the raw amino-acid sequence, 563 residues long: Arginine--tRNA ligase (563 aa).

Residues 121–131 (PNIAKPFSIGH) carry the 'HIGH' region motif.

Belongs to the class-I aminoacyl-tRNA synthetase family. In terms of assembly, monomer.

The protein localises to the cytoplasm. It carries out the reaction tRNA(Arg) + L-arginine + ATP = L-arginyl-tRNA(Arg) + AMP + diphosphate. The polypeptide is Arginine--tRNA ligase (Streptococcus mutans serotype c (strain ATCC 700610 / UA159)).